The sequence spans 520 residues: Polyprenol-phosphate-mannose--protein mannosyltransferase (520 aa).

10 helical membrane-spanning segments follow: residues 38–58 (WAIIAVFALVTRFTGLSSATA), 119–139 (LGWRIMVAIFGTLTIFAIMAI), 145–165 (GSTMVTFIAGILALADGVLLV), 168–188 (RFGMLDIFLVFFITAAAWALI), 237–257 (WSGLYYIAFFGLTSVFLDLWL), 274–294 (DVIPALGSLVIIPALLYIWSW), 388–408 (IYLFGTPAIWWLTVPVILWAL), 418–438 (GYVVPLVAFAAGFLPWLAAYD), 441–461 (MYFFYATALVPFTIIMLALAC), and 485–505 (YISLVVMMFLAFSPLFYGFVI).

It belongs to the glycosyltransferase 39 family.

Its subcellular location is the cell membrane. Its pathway is protein modification; protein glycosylation. Functionally, protein O-mannosyltransferase that catalyzes the transfer of a single mannose residue from a polyprenol phospho-mannosyl lipidic donor to the hydroxyl group of selected serine and threonine residues in acceptor proteins. This is Polyprenol-phosphate-mannose--protein mannosyltransferase (pmt) from Corynebacterium glutamicum (strain ATCC 13032 / DSM 20300 / JCM 1318 / BCRC 11384 / CCUG 27702 / LMG 3730 / NBRC 12168 / NCIMB 10025 / NRRL B-2784 / 534).